The following is a 34-amino-acid chain: DDCLGIFKSCNPDNDKCCESYKCSRRDKWCKYVL.

3 disulfides stabilise this stretch: cysteine 3/cysteine 18, cysteine 10/cysteine 23, and cysteine 17/cysteine 30.

Belongs to the neurotoxin 10 (Hwtx-1) family. 14 (Hntx-1) subfamily. In terms of tissue distribution, expressed by the venom gland.

The protein resides in the secreted. Voltage-gated sodium channel Nav1.7/SCN9A inhibitor. In Chromatopelma cyaneopubescens (Greenbottle blue tarantula), this protein is Mu-theraphotoxin-CCy1a.